We begin with the raw amino-acid sequence, 455 residues long: Genome polyprotein (455 aa).

The active-site For nuclear inclusion protein A activity is the C5. The segment covering 182–198 has biased composition (basic and acidic residues); sequence NLDAGKESKKETSDKGN. Residues 182-225 form a disordered region; that stretch reads NLDAGKESKKETSDKGNKPQNSQVGQGSKEPTKTGTVSKDVNVG.

It belongs to the potyviridae genome polyprotein family. Post-translationally, genome polyprotein of potyviruses undergoes post-translational proteolytic processing by the main proteinase NIa-pro resulting in the production of at least ten individual proteins. The P1 proteinase and the HC-pro cleave only their respective C-termini autocatalytically. 6K1 is essential for proper proteolytic separation of P3 from CI.

The protein localises to the virion. It catalyses the reaction RNA(n) + a ribonucleoside 5'-triphosphate = RNA(n+1) + diphosphate. In terms of biological role, an RNA-dependent RNA polymerase that plays an essential role in the virus replication. Functionally, involved in aphid transmission, cell-to-cell and systemis movement, encapsidation of the viral RNA and in the regulation of viral RNA amplification. In Citrullus lanatus (Watermelon), this protein is Genome polyprotein.